The primary structure comprises 337 residues: Vegetative-specific protein H5 (337 aa).

The Involved in the stabilization of the negatively charged intermediate by the formation of the oxyanion hole motif lies at histidine 88 to glycine 90. Active-site residues include serine 161, aspartate 261, and histidine 291.

This sequence belongs to the 'GDXG' lipolytic enzyme family.

The polypeptide is Vegetative-specific protein H5 (cinB) (Dictyostelium discoideum (Social amoeba)).